Here is a 754-residue protein sequence, read N- to C-terminus: Glutathione biosynthesis bifunctional protein GshAB (754 aa).

The segment at 1-333 (MHINQLLQHA…KAQKLNDKIA (333 aa)) is glutamate--cysteine ligase. In terms of domain architecture, ATP-grasp spans 489–752 (KKILRENGYP…LAKLFPEIST (264 aa)). 516-574 (SQIKNKPIVVKPKTTNFGLGISIFETAASHNDYEKALDIAFIEDYSVLVEEFIPGTEYR) is an ATP binding site. Mg(2+) is bound by residues Asp-696, Glu-717, and Asn-719. 3 residues coordinate Mn(2+): Asp-696, Glu-717, and Asn-719.

It in the N-terminal section; belongs to the glutamate--cysteine ligase type 1 family. Type 2 subfamily. In terms of assembly, monomer. Requires Mg(2+) as cofactor. The cofactor is Mn(2+).

The enzyme catalyses L-cysteine + L-glutamate + ATP = gamma-L-glutamyl-L-cysteine + ADP + phosphate + H(+). It catalyses the reaction gamma-L-glutamyl-L-cysteine + glycine + ATP = glutathione + ADP + phosphate + H(+). Its pathway is sulfur metabolism; glutathione biosynthesis; glutathione from L-cysteine and L-glutamate: step 1/2. It functions in the pathway sulfur metabolism; glutathione biosynthesis; glutathione from L-cysteine and L-glutamate: step 2/2. Functionally, synthesizes glutathione from L-glutamate and L-cysteine via gamma-L-glutamyl-L-cysteine. This is Glutathione biosynthesis bifunctional protein GshAB from Streptococcus mutans serotype c (strain ATCC 700610 / UA159).